We begin with the raw amino-acid sequence, 149 residues long: Protegrin-5 (149 aa).

The signal sequence occupies residues 1–29 (METQRASLCLGRWSLWLLLLGLVVPSASA). Residues 30–130 (QALSYREAVL…DITCNEVQGV (101 aa)) constitute a propeptide that is removed on maturation. The tract at residues 61-80 (DQPPKADEDPGTPKPVSFTV) is disordered. 4 disulfides stabilise this stretch: cysteine 85–cysteine 96, cysteine 107–cysteine 124, cysteine 136–cysteine 145, and cysteine 138–cysteine 143. Position 148 is an arginine amide (arginine 148).

The protein belongs to the cathelicidin family.

Its subcellular location is the secreted. In terms of biological role, microbicidal activity. This is Protegrin-5 (NPG5) from Sus scrofa (Pig).